The primary structure comprises 362 residues: Dihydroorotate dehydrogenase (quinone) (362 aa).

FMN contacts are provided by residues A60 to K64 and T84. K64 provides a ligand contact to substrate. N109–F113 contacts substrate. FMN is bound by residues N137 and N168. Residue N168 coordinates substrate. Catalysis depends on S171, which acts as the Nucleophile. N173 contributes to the substrate binding site. K213 and S241 together coordinate FMN. Position 242-243 (N242–T243) interacts with substrate. FMN-binding positions include G264, G293, and Y314 to S315.

This sequence belongs to the dihydroorotate dehydrogenase family. Type 2 subfamily. Monomer. The cofactor is FMN.

It is found in the cell membrane. The catalysed reaction is (S)-dihydroorotate + a quinone = orotate + a quinol. Its pathway is pyrimidine metabolism; UMP biosynthesis via de novo pathway; orotate from (S)-dihydroorotate (quinone route): step 1/1. Its function is as follows. Catalyzes the conversion of dihydroorotate to orotate with quinone as electron acceptor. This Bartonella henselae (strain ATCC 49882 / DSM 28221 / CCUG 30454 / Houston 1) (Rochalimaea henselae) protein is Dihydroorotate dehydrogenase (quinone).